A 569-amino-acid polypeptide reads, in one-letter code: Proline--tRNA ligase (569 aa).

Belongs to the class-II aminoacyl-tRNA synthetase family. ProS type 1 subfamily. As to quaternary structure, homodimer.

Its subcellular location is the cytoplasm. The enzyme catalyses tRNA(Pro) + L-proline + ATP = L-prolyl-tRNA(Pro) + AMP + diphosphate. Its function is as follows. Catalyzes the attachment of proline to tRNA(Pro) in a two-step reaction: proline is first activated by ATP to form Pro-AMP and then transferred to the acceptor end of tRNA(Pro). As ProRS can inadvertently accommodate and process non-cognate amino acids such as alanine and cysteine, to avoid such errors it has two additional distinct editing activities against alanine. One activity is designated as 'pretransfer' editing and involves the tRNA(Pro)-independent hydrolysis of activated Ala-AMP. The other activity is designated 'posttransfer' editing and involves deacylation of mischarged Ala-tRNA(Pro). The misacylated Cys-tRNA(Pro) is not edited by ProRS. The protein is Proline--tRNA ligase of Halalkalibacterium halodurans (strain ATCC BAA-125 / DSM 18197 / FERM 7344 / JCM 9153 / C-125) (Bacillus halodurans).